We begin with the raw amino-acid sequence, 1172 residues long: NACHT, LRR and PYD domains-containing protein 1b allele 3 (1172 aa).

The tract at residues 1-22 (MEESPPKQKSNTKVAQHEGQQD) is disordered. The NACHT domain occupies 126–435 (QLVIIEGAAG…EFFAAISCIL (310 aa)). An ATP-binding site is contributed by 132–139 (GAAGIGKS). LRR repeat units lie at residues 627–647 (NLEG…QSLC) and 684–704 (SLTE…RMLC). Residues 789 to 922 (FWGPTGPVAT…GYTVLKNPSF (134 aa)) are ZU5. The FIIND domain maps to 789–1072 (FWGPTGPVAT…LRPALPRIAQ (284 aa)). A UPA region spans residues 923–1072 (SPMGDVLRII…LRPALPRIAQ (150 aa)). One can recognise a CARD domain in the interval 1082-1165 (HFMDQHREQL…HLVMDLLEKS (84 aa)).

This sequence belongs to the NLRP family. Post-translationally, in contrast to allele 1 and 2, not able to mediate autocatalytic cleavage. As to expression, expressed in macrophages.

The protein resides in the cytoplasm. The protein localises to the cytosol. In contrast to allele 1, does not undergo autocatalytic cleavage within the FIIND domain and its mode of activation remains unclear. In contrast to alleles 1 and 2, allele 3 is not activated by Val-boroPro (Talabostat, PT-100). Not activated by cleavage by B.anthracis lethal toxin (LT) endopeptidase. Not activated by metabolic inhibitors, such as 2-deoxy-D-glucose and sodium azide. May act as the sensor component of the Nlrp1b inflammasome, which mediates inflammasome activation in response to various pathogen-associated signals, leading to subsequent pyroptosis. Inflammasomes are supramolecular complexes that assemble in the cytosol in response to pathogens and other damage-associated signals and play critical roles in innate immunity and inflammation. May act as a recognition receptor (PRR), which recognizes specific pathogens and other damage-associated signals and forms an inflammasome complex: the inflammasome directly recruits pro-caspase-1 (proCASP1) independently of PYCARD/ASC and promotes caspase-1 (CASP1) activation, which subsequently cleaves and activates inflammatory cytokines IL1B and IL18 and gasdermin-D (GSDMD), leading to pyroptosis. In the absence of GSDMD expression, the Nlrp1b inflammasome is able to recruit and activate CASP8, leading to activation of gasdermin-E (GSDME). Contrary to Nlrp1b allele 1, allele 3 is not activated by Bacillus anthracis lethal toxin. The absence of autocatalytic cleavage within the FIIND domain, which regulates activation in other alleles, suggests that allele 3 may be non-functional. This is NACHT, LRR and PYD domains-containing protein 1b allele 3 from Mus musculus (Mouse).